Reading from the N-terminus, the 1028-residue chain is Contactin-3 (1028 aa).

A signal peptide spans 1 to 19; sequence MMLSWKQLILLSFIGCLAG. Ig-like C2-type domains are found at residues 32–117, 122–209, 227–313, 318–402, 408–497, and 499–593; these read PSNS…AKLQ, ENFK…RVLG, PKIE…GRLT, PYWL…AELK, PDFS…LVVT, and PTRI…AELI. Disulfide bonds link cysteine 50–cysteine 100, cysteine 144–cysteine 196, cysteine 249–cysteine 297, cysteine 339–cysteine 386, and cysteine 431–cysteine 479. Asparagine 65 and asparagine 193 each carry an N-linked (GlcNAc...) asparagine glycan. Asparagine 377, asparagine 468, and asparagine 489 each carry an N-linked (GlcNAc...) asparagine glycan. Cysteine 521 and cysteine 577 are oxidised to a cystine. Fibronectin type-III domains lie at 600 to 698, 703 to 800, 805 to 901, and 902 to 998; these read PPEN…TEEA, APSE…SAEE, APSH…TKKT, and PPSQ…TSMD. The segment at 684–714 is disordered; it reads GEPSLPSEKVRTEEAAPEIAPSEVSGGGGSR. N-linked (GlcNAc...) asparagine glycosylation is found at asparagine 765, asparagine 860, asparagine 895, asparagine 913, asparagine 931, and asparagine 956. The GPI-anchor amidated serine moiety is linked to residue serine 1002. The propeptide at 1003 to 1028 is removed in mature form; that stretch reads TSAISNIHPLSGYMSVLLFFIVNALW.

This sequence belongs to the immunoglobulin superfamily. Contactin family. As to quaternary structure, interacts with PTPRG. In terms of tissue distribution, specifically expressed in brain. Ectopically expressed in tumors expressing endogenous intracisternal A-type particles (IAPs).

Its subcellular location is the cell membrane. Functionally, contactins mediate cell surface interactions during nervous system development. Has some neurite outgrowth-promoting activity. This Mus musculus (Mouse) protein is Contactin-3 (Cntn3).